The sequence spans 635 residues: Threonine--tRNA ligase (635 aa).

The region spanning 1 to 61 is the TGS domain; the sequence is MIKITLKDGK…HKDSSLEILT (61 aa). A catalytic region spans residues 242-532; the sequence is DHRKLGKELD…LIEQYAGAFP (291 aa). Positions 333, 384, and 509 each coordinate Zn(2+).

This sequence belongs to the class-II aminoacyl-tRNA synthetase family. Homodimer. Zn(2+) serves as cofactor.

It is found in the cytoplasm. The enzyme catalyses tRNA(Thr) + L-threonine + ATP = L-threonyl-tRNA(Thr) + AMP + diphosphate + H(+). Functionally, catalyzes the attachment of threonine to tRNA(Thr) in a two-step reaction: L-threonine is first activated by ATP to form Thr-AMP and then transferred to the acceptor end of tRNA(Thr). Also edits incorrectly charged L-seryl-tRNA(Thr). The polypeptide is Threonine--tRNA ligase (Clostridium botulinum (strain ATCC 19397 / Type A)).